Reading from the N-terminus, the 410-residue chain is Ribonucleoside-diphosphate reductase small chain (410 aa).

Over residues 1-20 (MSVQTSPSKQVTSGIQNLNM) the composition is skewed to polar residues. Disordered regions lie at residues 1–43 (MSVQ…DEDL) and 55–78 (NANK…ANEP). Composition is skewed to basic and acidic residues over residues 23–43 (PAKK…DEDL) and 55–65 (NANKKAAEAKK). Positions 146, 177, and 180 each coordinate Fe cation. Tyr184 is a catalytic residue. Fe cation-binding residues include Glu240, Glu274, and His277.

It belongs to the ribonucleoside diphosphate reductase small chain family. As to quaternary structure, heterodimer of a large and a small subunit. Fe cation is required as a cofactor.

The catalysed reaction is a 2'-deoxyribonucleoside 5'-diphosphate + [thioredoxin]-disulfide + H2O = a ribonucleoside 5'-diphosphate + [thioredoxin]-dithiol. Its function is as follows. Provides the precursors necessary for DNA synthesis. Catalyzes the biosynthesis of deoxyribonucleotides from the corresponding ribonucleotides. The polypeptide is Ribonucleoside-diphosphate reductase small chain (rnr-2) (Neurospora crassa (strain ATCC 24698 / 74-OR23-1A / CBS 708.71 / DSM 1257 / FGSC 987)).